A 386-amino-acid polypeptide reads, in one-letter code: Putative aminotransferase YugH (386 aa).

Lysine 234 bears the N6-(pyridoxal phosphate)lysine mark.

It belongs to the class-I pyridoxal-phosphate-dependent aminotransferase family. Pyridoxal 5'-phosphate is required as a cofactor.

It localises to the cytoplasm. The sequence is that of Putative aminotransferase YugH (yugH) from Bacillus subtilis (strain 168).